A 179-amino-acid chain; its full sequence is Large ribosomal subunit protein uL6 (179 aa).

It belongs to the universal ribosomal protein uL6 family. As to quaternary structure, part of the 50S ribosomal subunit.

Its function is as follows. This protein binds to the 23S rRNA, and is important in its secondary structure. It is located near the subunit interface in the base of the L7/L12 stalk, and near the tRNA binding site of the peptidyltransferase center. The sequence is that of Large ribosomal subunit protein uL6 from Bacillus subtilis (strain 168).